The following is a 613-amino-acid chain: Cleavage and polyadenylation specificity factor subunit 3-II (613 aa).

An HXHXDH motif motif is present at residues 67–72 (HFHMDH).

Belongs to the metallo-beta-lactamase superfamily. RNA-metabolizing metallo-beta-lactamase-like family. INTS11 subfamily. In terms of assembly, component of the CPSF complex, at least composed of CPSF160, CPSF100, CPSF73-I, CPSF73-II, CPSF30, FY and FIPS5. Interacts with CPSF30, CPSF100, CPSF160 and FY. As to expression, highly expressed in senescence leaves, petals, stamens, pollen and late stages of siliques with seeds. Also detected in roots, stems, leaves and seedlings.

The protein resides in the nucleus. Component of the cleavage and polyadenylation specificity factor (CPSF) complex that play a key role in pre-mRNA 3'-end formation, recognizing the AAUAAA signal sequence and interacting with poly(A) polymerase and other factors to bring about cleavage and poly(A) addition. May function as mRNA 3'-end-processing endonuclease and also be involved in the histone 3'-end pre-mRNA processing. The chain is Cleavage and polyadenylation specificity factor subunit 3-II (CPSF73-II) from Arabidopsis thaliana (Mouse-ear cress).